Consider the following 434-residue polypeptide: Gamma-glutamyl phosphate reductase (434 aa).

A compositionally biased stretch (polar residues) spans 1–11 (MTNSNEAQENA). The disordered stretch occupies residues 1–26 (MTNSNEAQENALSPERQAERDEVLAK). A compositionally biased stretch (basic and acidic residues) spans 16–25 (RQAERDEVLA).

It belongs to the gamma-glutamyl phosphate reductase family.

The protein localises to the cytoplasm. The enzyme catalyses L-glutamate 5-semialdehyde + phosphate + NADP(+) = L-glutamyl 5-phosphate + NADPH + H(+). It functions in the pathway amino-acid biosynthesis; L-proline biosynthesis; L-glutamate 5-semialdehyde from L-glutamate: step 2/2. Functionally, catalyzes the NADPH-dependent reduction of L-glutamate 5-phosphate into L-glutamate 5-semialdehyde and phosphate. The product spontaneously undergoes cyclization to form 1-pyrroline-5-carboxylate. In Corynebacterium jeikeium (strain K411), this protein is Gamma-glutamyl phosphate reductase.